The sequence spans 312 residues: Ribonuclease HIII (312 aa).

The RNase H type-2 domain maps to 95–311 (FNCIGSDEAG…REKAQKILKP (217 aa)). 3 residues coordinate a divalent metal cation: Asp-101, Glu-102, and Asp-206.

It belongs to the RNase HII family. RnhC subfamily. Requires Mn(2+) as cofactor. It depends on Mg(2+) as a cofactor.

The protein localises to the cytoplasm. The enzyme catalyses Endonucleolytic cleavage to 5'-phosphomonoester.. Endonuclease that specifically degrades the RNA of RNA-DNA hybrids. The sequence is that of Ribonuclease HIII from Staphylococcus aureus (strain MSSA476).